Consider the following 476-residue polypeptide: MAKEQVQAITKMEEDFAQWYTDIVKKAELVDYSSVKGCMILRPYGYALWENMQKVMDEKLKETGHENVYMPMFIPESLLQKEKDHVEGFAPEVAWVTHGGDEKLAERLCVRPTSETLFCEHFSKIVQSYNDLPKLYNQWCSVVRWEKTTRPFLRTTEFLWQEGHTIHETAEESQAETLNILNLYASFCEDYLAIPVIKGQKTEKEKFAGAKATYTIESLMHDGKALQTGTSHNFGTNFSEAFDIKFLDRNGKWQYVHQTSWGVSTRMIGGLIMVHSDNNGLVLPPKVAPVQVVIVPIAQHKEGVLAKATELQAHIQKVARVKIDASNKTPGWKFNEYEMKGIPIRLEVGPKDIEKNQVVLVRRDTKEKEFVPMDQLEERIPALLEEIHIALFNKAKAFRDENTYVATNFEEMKKIADEKQGFIKAMWCGELACEEKLKEEFGVSSRCMPFEQEHLAEECICCGKEAKQMVYWGKAY.

The protein belongs to the class-II aminoacyl-tRNA synthetase family. ProS type 3 subfamily. Homodimer.

It localises to the cytoplasm. The catalysed reaction is tRNA(Pro) + L-proline + ATP = L-prolyl-tRNA(Pro) + AMP + diphosphate. In terms of biological role, catalyzes the attachment of proline to tRNA(Pro) in a two-step reaction: proline is first activated by ATP to form Pro-AMP and then transferred to the acceptor end of tRNA(Pro). The polypeptide is Proline--tRNA ligase 2 (Bacillus cereus (strain ATCC 14579 / DSM 31 / CCUG 7414 / JCM 2152 / NBRC 15305 / NCIMB 9373 / NCTC 2599 / NRRL B-3711)).